The following is a 657-amino-acid chain: Histidine ammonia-lyase (657 aa).

The 5-imidazolinone (Ala-Gly) cross-link spans 253–255; it reads ASG. Ser-254 carries the 2,3-didehydroalanine (Ser) modification. Thr-396 is subject to Phosphothreonine. Ser-635 carries the phosphoserine modification. Thr-637 is modified (phosphothreonine). Phosphoserine is present on Ser-648.

It belongs to the PAL/histidase family. Contains an active site 4-methylidene-imidazol-5-one (MIO), which is formed autocatalytically by cyclization and dehydration of residues Ala-Ser-Gly.

It carries out the reaction L-histidine = trans-urocanate + NH4(+). It participates in amino-acid degradation; L-histidine degradation into L-glutamate; N-formimidoyl-L-glutamate from L-histidine: step 1/3. This is Histidine ammonia-lyase (Hal) from Mus musculus (Mouse).